We begin with the raw amino-acid sequence, 291 residues long: MKIAILSRNSKLYSTRRLIEAGRTRGHTVRILDPLRCYMRIAADGFSLHYKGKPITGFDAVIPRIGASVTRYGTAVLRQLEFMGTYTPNPSDAILRSRDKLRAHQLLASQGIDMPVTVFGDNPDDTQDLLSMLGPPPHVVKLNEGAQGAGVILTEKASASRGVVEALRGLYANFIVQEFIGEAEGADLRCFVVGDRVVAAMRRQAADGDFRSNLHLGGTAAMAEASPQEQDVAVRSARALGLAVAGVDLIRSQRGPLVLEVNSTPGLEGVEGVCGVDVAGTIIQHLEQAIR.

An ATP-grasp domain is found at 104–287; sequence HQLLASQGID…VAGTIIQHLE (184 aa). ATP contacts are provided by residues Lys141, 178 to 179, Asp187, and 211 to 213; these read EF and RSN. Residues Asp248, Glu260, and Asn262 each coordinate Mg(2+). Asp248, Glu260, and Asn262 together coordinate Mn(2+).

This sequence belongs to the RimK family. The cofactor is Mg(2+). Mn(2+) is required as a cofactor.

The protein is Probable alpha-L-glutamate ligase of Xanthomonas campestris pv. campestris (strain 8004).